An 838-amino-acid polypeptide reads, in one-letter code: Protein P (838 aa).

The terminal protein domain (TP) stretch occupies residues 1–179 (MPLSYQHFRK…FCGSPYSWEQ (179 aa)). The spacer stretch occupies residues 180-341 (ELQHSQRHGD…YCLSHLVNLL (162 aa)). Residues 218 to 242 (LGLQPHQGPLATSQPGRSGSIRPRA) are disordered. Residues 342 to 685 (EDWGPCVEHG…YLNLYPVARQ (344 aa)) are polymerase/reverse transcriptase domain (RT). The Reverse transcriptase domain occupies 352–595 (EHHIRIPRTP…YSLNFMGYVI (244 aa)). Aspartate 424, aspartate 546, and aspartate 547 together coordinate Mg(2+).

It belongs to the hepadnaviridae P protein family.

The catalysed reaction is DNA(n) + a 2'-deoxyribonucleoside 5'-triphosphate = DNA(n+1) + diphosphate. It carries out the reaction Endonucleolytic cleavage to 5'-phosphomonoester.. Its activity is regulated as follows. Activated by host HSP70 and HSP40 in vitro to be able to bind the epsilon loop of the pgRNA. Because deletion of the RNase H region renders the protein partly chaperone-independent, the chaperones may be needed indirectly to relieve occlusion of the RNA-binding site by this domain. Inhibited by several reverse-transcriptase inhibitors: Lamivudine, Adefovir and Entecavir. Multifunctional enzyme that converts the viral RNA genome into dsDNA in viral cytoplasmic capsids. This enzyme displays a DNA polymerase activity that can copy either DNA or RNA templates, and a ribonuclease H (RNase H) activity that cleaves the RNA strand of RNA-DNA heteroduplexes in a partially processive 3'- to 5'-endonucleasic mode. Neo-synthesized pregenomic RNA (pgRNA) are encapsidated together with the P protein, and reverse-transcribed inside the nucleocapsid. Initiation of reverse-transcription occurs first by binding the epsilon loop on the pgRNA genome, and is initiated by protein priming, thereby the 5'-end of (-)DNA is covalently linked to P protein. Partial (+)DNA is synthesized from the (-)DNA template and generates the relaxed circular DNA (RC-DNA) genome. After budding and infection, the RC-DNA migrates in the nucleus, and is converted into a plasmid-like covalently closed circular DNA (cccDNA). The activity of P protein does not seem to be necessary for cccDNA generation, and is presumably released from (+)DNA by host nuclear DNA repair machinery. The sequence is that of Protein P from Homo sapiens (Human).